The chain runs to 162 residues: Large ribosomal subunit protein uL10 (162 aa).

The protein belongs to the universal ribosomal protein uL10 family. In terms of assembly, part of the ribosomal stalk of the 50S ribosomal subunit. The N-terminus interacts with L11 and the large rRNA to form the base of the stalk. The C-terminus forms an elongated spine to which L12 dimers bind in a sequential fashion forming a multimeric L10(L12)X complex.

Functionally, forms part of the ribosomal stalk, playing a central role in the interaction of the ribosome with GTP-bound translation factors. The chain is Large ribosomal subunit protein uL10 from Vibrio vulnificus (strain CMCP6).